The primary structure comprises 463 residues: Argininosuccinate lyase (463 aa).

This sequence belongs to the lyase 1 family. Argininosuccinate lyase subfamily.

It localises to the cytoplasm. The enzyme catalyses 2-(N(omega)-L-arginino)succinate = fumarate + L-arginine. The protein operates within amino-acid biosynthesis; L-arginine biosynthesis; L-arginine from L-ornithine and carbamoyl phosphate: step 3/3. In Staphylococcus epidermidis (strain ATCC 35984 / DSM 28319 / BCRC 17069 / CCUG 31568 / BM 3577 / RP62A), this protein is Argininosuccinate lyase.